The following is a 471-amino-acid chain: Serine hydroxymethyltransferase, cytosolic (471 aa).

K249 bears the N6-(pyridoxal phosphate)lysine mark.

Belongs to the SHMT family. Pyridoxal 5'-phosphate is required as a cofactor.

The protein localises to the cytoplasm. The protein resides in the cytosol. The catalysed reaction is (6R)-5,10-methylene-5,6,7,8-tetrahydrofolate + glycine + H2O = (6S)-5,6,7,8-tetrahydrofolate + L-serine. Its pathway is one-carbon metabolism; tetrahydrofolate interconversion. Catalyzes the interconversion of serine and glycine. Essential for viability and required for virulence in a murine model of established pulmonary infection. In Aspergillus fumigatus (strain ATCC MYA-4609 / CBS 101355 / FGSC A1100 / Af293) (Neosartorya fumigata), this protein is Serine hydroxymethyltransferase, cytosolic.